The sequence spans 326 residues: Putative ABC transporter ATP-binding protein MPN_334 (326 aa).

Residues 7-239 (VEVKHLEKEF…NFGYRLKVNN (233 aa)) form the ABC transporter domain. 42–49 (GQNGAGKT) provides a ligand contact to ATP.

Belongs to the ABC transporter superfamily.

This is Putative ABC transporter ATP-binding protein MPN_334 from Mycoplasma pneumoniae (strain ATCC 29342 / M129 / Subtype 1) (Mycoplasmoides pneumoniae).